The sequence spans 684 residues: 1,4-alpha-glucan-branching enzyme (684 aa).

Trp-88 and Lys-123 together coordinate (1,4-alpha-D-glucosyl)n. Residue Asp-340 is the Nucleophile of the active site. Glu-395 functions as the Proton donor in the catalytic mechanism.

It belongs to the glycosyl hydrolase 13 family. GlgB subfamily.

It is found in the cytoplasm. The catalysed reaction is Transfers a segment of a (1-&gt;4)-alpha-D-glucan chain to a primary hydroxy group in a similar glucan chain.. It functions in the pathway glycan biosynthesis; glycogen biosynthesis. Glycogen-branching enzyme participates in the glycogen biosynthetic process along with glycogenin and glycogen synthase. Generates alpha-1,6-glucosidic branches from alpha-1,4-linked glucose chains, to increase solubility of the glycogen polymer. The polypeptide is 1,4-alpha-glucan-branching enzyme (be1) (Emericella nidulans (strain FGSC A4 / ATCC 38163 / CBS 112.46 / NRRL 194 / M139) (Aspergillus nidulans)).